The sequence spans 390 residues: Succinyl-diaminopimelate desuccinylase (390 aa).

H74 contacts Zn(2+). D76 is a catalytic residue. D107 contacts Zn(2+). The Proton acceptor role is filled by E140. The Zn(2+) site is built by E141, E169, and H363.

Belongs to the peptidase M20A family. DapE subfamily. In terms of assembly, homodimer. Requires Zn(2+) as cofactor. The cofactor is Co(2+).

It catalyses the reaction N-succinyl-(2S,6S)-2,6-diaminopimelate + H2O = (2S,6S)-2,6-diaminopimelate + succinate. Its pathway is amino-acid biosynthesis; L-lysine biosynthesis via DAP pathway; LL-2,6-diaminopimelate from (S)-tetrahydrodipicolinate (succinylase route): step 3/3. Functionally, catalyzes the hydrolysis of N-succinyl-L,L-diaminopimelic acid (SDAP), forming succinate and LL-2,6-diaminopimelate (DAP), an intermediate involved in the bacterial biosynthesis of lysine and meso-diaminopimelic acid, an essential component of bacterial cell walls. The sequence is that of Succinyl-diaminopimelate desuccinylase from Bartonella quintana (strain Toulouse) (Rochalimaea quintana).